The following is a 1734-amino-acid chain: Gag-Pol polyprotein (1734 aa).

A lipid anchor (N-myristoyl glycine; by host) is attached at G2. A disordered region spans residues 107–217 (PSPTAPILPS…STTSRAFPLR (111 aa)). A PTAP/PSAP motif motif is present at residues 109-112 (PTAP). Residues 128–132 (LYPAL) carry the LYPX(n)L motif motif. The short motif at 161 to 164 (PPPY) is the PPXY motif element. S191 carries the phosphoserine; by host modification. The interaction with host PIAS4 stretch occupies residues 344 to 392 (GRSPTNLAKVKGITQGPNESPSAFLERLKEAYRRYTPYDPEDPGQETNV). The interval 429–434 (IFNKRE) is interaction with host UBE2I. Basic and acidic residues-rich tracts occupy residues 434-465 (ETPE…EKER) and 485-498 (RQDR…RPQL). Disordered regions lie at residues 434–498 (ETPE…RPQL) and 512–552 (WAKD…PRIT). The stretch at 437 to 478 (EEREERVRRETEEKEERRRAEEEQKEKERDRRRHREMSKLLA) forms a coiled coil. The CCHC-type zinc-finger motif lies at 501–518 (DQCAYCKEKGHWAKDCPK). Positions 560-630 (VTFLVDTGAQ…CPYPLLGRDL (71 aa)) constitute a Peptidase A2 domain. D565 acts as the Protease; shared with dimeric partner in catalysis. Residues 740–931 (LDQGILVPCQ…KQVKYLGYLL (192 aa)) form the Reverse transcriptase domain. Mg(2+) is bound by residues D808, D882, D883, D1182, E1220, D1241, and D1311. The region spanning 1173 to 1319 (PDADHTWYTD…ADQAAREAAI (147 aa)) is the RNase H type-1 domain. The HHCC-type zinc-finger motif lies at 1386 to 1426 (HRLTHLGYQKMKALLDRGESPYYMLNRDKTLQYVADSCTVC). The Integrase catalytic domain maps to 1443–1601 (RGHRPGSHWE…TPYEILYGAP (159 aa)). Mg(2+) contacts are provided by D1454 and D1513.

This sequence belongs to the retroviral Pol polyprotein family. Homohexamer; further associates as homomultimer. The virus core is composed of a lattice formed from hexagonal rings, each containing six capsid monomers. As to quaternary structure, interacts (via PPXY motif) with host NEDD4. Interacts (via PSAP motif) with host TSG101. Interacts (via LYPX(n)L motif) with host PDCD6IP. In terms of assembly, the reverse transcriptase is a monomer (Potential). Interacts (via RNase domains) with host release factor ETF1; this interaction is essential for translational readthrough of amber codon between viral gag and pol genes, as well as for viral replication. Homodimer. Requires Mg(2+) as cofactor. Ubiquitinated by ITCH. Gag can recruit the ubiquitin ligase Itch in an L domain-independent manner to facilitate virus release via a mechanism that involves Gag ubiquitination. In terms of processing, specific enzymatic cleavages by the viral protease yield mature proteins. The protease is released by autocatalytic cleavage. The polyprotein is cleaved during and after budding, this process is termed maturation. Post-translationally, sumoylated; which is required for virus replication. Phosphorylated on serine residues.

The protein resides in the virion. The protein localises to the host cell membrane. It localises to the host late endosome membrane. Its subcellular location is the host endosome. It is found in the host multivesicular body. The protein resides in the host cytoplasm. The enzyme catalyses DNA(n) + a 2'-deoxyribonucleoside 5'-triphosphate = DNA(n+1) + diphosphate. The catalysed reaction is Endonucleolytic cleavage to 5'-phosphomonoester.. With respect to regulation, most efficiently inhibited by Amprenavir, which is able to block Gag-Pol processing in infected cells. Functionally, plays a role in budding and is processed by the viral protease during virion maturation outside the cell. During budding, it recruits, in a PPXY-dependent or independent manner, Nedd4-like ubiquitin ligases that conjugate ubiquitin molecules to Gag-Pol, or to Gag-Pol binding host factors. Interaction with HECT ubiquitin ligases probably link the viral protein to the host ESCRT pathway and facilitates release. In terms of biological role, targets Gag and gag-pol polyproteins to the plasma membrane via a multipartite membrane binding signal, that includes its myristoylated N-terminus. Also mediates nuclear localization of the pre-integration complex. Constituent of the pre-integration complex (PIC) which tethers the latter to mitotic chromosomes. This allows the integration of the viral genome into the host DNA. Its function is as follows. Forms the spherical core of the virion that encapsulates the genomic RNA-nucleocapsid complex. Functionally, involved in the packaging and encapsidation of two copies of the genome. Binds with high affinity to conserved UCUG elements within the packaging signal, located near the 5'-end of the genome. This binding is dependent on genome dimerization. Acts as a nucleic acid chaperone which is involved in rearrangement of nucleic acid secondary structures during gRNA retrotranscription. In terms of biological role, the aspartyl protease mediates proteolytic cleavages of Gag and Gag-Pol polyproteins during or shortly after the release of the virion from the plasma membrane. Cleavages take place as an ordered, step-wise cascade to yield mature proteins. This process is called maturation. Displays maximal activity during the budding process just prior to particle release from the cell (Potential). Cleaves the translation initiation factor eIF4G leading to the inhibition of host cap-dependent translation. RT is a multifunctional enzyme that converts the viral dimeric RNA genome into dsDNA in the cytoplasm, shortly after virus entry into the cell. This enzyme displays a DNA polymerase activity that can copy either DNA or RNA templates, and a ribonuclease H (RNase H) activity that cleaves the RNA strand of RNA-DNA heteroduplexes in a partially processive 3' to 5' endonucleasic mode. Conversion of viral genomic RNA into dsDNA requires many steps. A tRNA binds to the primer-binding site (PBS) situated at the 5' end of the viral RNA. RT uses the 3' end of the tRNA primer to perform a short round of RNA-dependent minus-strand DNA synthesis. The reading proceeds through the U5 region and ends after the repeated (R) region which is present at both ends of viral RNA. The portion of the RNA-DNA heteroduplex is digested by the RNase H, resulting in a ssDNA product attached to the tRNA primer. This ssDNA/tRNA hybridizes with the identical R region situated at the 3' end of viral RNA. This template exchange, known as minus-strand DNA strong stop transfer, can be either intra- or intermolecular. RT uses the 3' end of this newly synthesized short ssDNA to perform the RNA-dependent minus-strand DNA synthesis of the whole template. RNase H digests the RNA template except for a polypurine tract (PPT) situated at the 5' end of the genome. It is not clear if both polymerase and RNase H activities are simultaneous. RNase H probably can proceed both in a polymerase-dependent (RNA cut into small fragments by the same RT performing DNA synthesis) and a polymerase-independent mode (cleavage of remaining RNA fragments by free RTs). Secondly, RT performs DNA-directed plus-strand DNA synthesis using the PPT that has not been removed by RNase H as primers. PPT and tRNA primers are then removed by RNase H. The 3' and 5' ssDNA PBS regions hybridize to form a circular dsDNA intermediate. Strand displacement synthesis by RT to the PBS and PPT ends produces a blunt ended, linear dsDNA copy of the viral genome that includes long terminal repeats (LTRs) at both ends. Its function is as follows. Catalyzes viral DNA integration into the host chromosome, by performing a series of DNA cutting and joining reactions. This enzyme activity takes place after virion entry into a cell and reverse transcription of the RNA genome in dsDNA. The first step in the integration process is 3' processing. This step requires a complex comprising the viral genome, matrix protein and integrase. This complex is called the pre-integration complex (PIC). The integrase protein removes 2 nucleotides from each 3' end of the viral DNA, leaving recessed CA OH's at the 3' ends. In the second step that requires cell division, the PIC enters cell nucleus. In the third step, termed strand transfer, the integrase protein joins the previously processed 3' ends to the 5' ends of strands of target cellular DNA at the site of integration. The last step is viral DNA integration into host chromosome. The polypeptide is Gag-Pol polyprotein (pol) (AKV murine leukemia virus (AKR (endogenous) murine leukemia virus)).